Here is a 454-residue protein sequence, read N- to C-terminus: Bifunctional protein GlmU (454 aa).

The interval Met-1–Arg-226 is pyrophosphorylase. Residues Leu-8–Gly-11, Lys-22, Gln-73, Gly-78–Thr-79, Tyr-100–Asp-102, Gly-137, Glu-151, Asn-166, and Asn-224 each bind UDP-N-acetyl-alpha-D-glucosamine. Asp-102 lines the Mg(2+) pocket. Asn-224 is a Mg(2+) binding site. Residues Leu-227–Gln-247 form a linker region. An N-acetyltransferase region spans residues Gly-248–Lys-454. Residues Arg-330 and Lys-348 each coordinate UDP-N-acetyl-alpha-D-glucosamine. The active-site Proton acceptor is His-360. UDP-N-acetyl-alpha-D-glucosamine-binding residues include Tyr-363 and Asn-374. Acetyl-CoA contacts are provided by residues Ala-377, Asn-383 to Tyr-384, Ser-402, Ala-420, and Arg-437.

This sequence in the N-terminal section; belongs to the N-acetylglucosamine-1-phosphate uridyltransferase family. The protein in the C-terminal section; belongs to the transferase hexapeptide repeat family. Homotrimer. Requires Mg(2+) as cofactor.

Its subcellular location is the cytoplasm. It catalyses the reaction alpha-D-glucosamine 1-phosphate + acetyl-CoA = N-acetyl-alpha-D-glucosamine 1-phosphate + CoA + H(+). It carries out the reaction N-acetyl-alpha-D-glucosamine 1-phosphate + UTP + H(+) = UDP-N-acetyl-alpha-D-glucosamine + diphosphate. Its pathway is nucleotide-sugar biosynthesis; UDP-N-acetyl-alpha-D-glucosamine biosynthesis; N-acetyl-alpha-D-glucosamine 1-phosphate from alpha-D-glucosamine 6-phosphate (route II): step 2/2. It participates in nucleotide-sugar biosynthesis; UDP-N-acetyl-alpha-D-glucosamine biosynthesis; UDP-N-acetyl-alpha-D-glucosamine from N-acetyl-alpha-D-glucosamine 1-phosphate: step 1/1. It functions in the pathway bacterial outer membrane biogenesis; LPS lipid A biosynthesis. Functionally, catalyzes the last two sequential reactions in the de novo biosynthetic pathway for UDP-N-acetylglucosamine (UDP-GlcNAc). The C-terminal domain catalyzes the transfer of acetyl group from acetyl coenzyme A to glucosamine-1-phosphate (GlcN-1-P) to produce N-acetylglucosamine-1-phosphate (GlcNAc-1-P), which is converted into UDP-GlcNAc by the transfer of uridine 5-monophosphate (from uridine 5-triphosphate), a reaction catalyzed by the N-terminal domain. This Acinetobacter baumannii (strain AYE) protein is Bifunctional protein GlmU.